The chain runs to 658 residues: MNQQQRMTAVGTDKELSDLLDFSMMFPLPVANGKTRPTTLASTQFGGGSGLEERTGSAPWGTEDHNGSTFDQGRGYGDGTHYGEHRELPSHEGNLSAPFLASGLVGKNDRPPYSTFGRDSGMTMNQTGFLSGDLAMNSPSALSPNAGKAGSQYYTYPNNSRRRPGDSNLDAQPKKVRKVPPGLPSSVYPANSGDEYCGDRGSYASTKTPNSVYPGAFYMADGLHSSDIWASSGGIGQGGYSSVLNSSQSSVSQTTGFSSLHPHERMGFPMHSGEVNPSVTSSFSSTPAQYGVSSHTPPISTGDTIIGNRGTATGSSGDALGKALASIYSPDHSSTNFSSTPSTPVGSPQGITGSGQWPRANGPGALSPSYDGTLHTLQNKMEDRLDEAIHVLRSHAVGQTGALPGGHDDIHSLLSATASVLGSGFPAAVLSLANRHSMLNSHTEEALPSASNMLHSQVTVPAQPGSLPDLTRPQDSYSGLPGLGRAIPPGRVPDIKRESKEDEENRSVADLSDDEKKESKPQRSRTRCSINSQDEDEDEDDDNLPPEQKAEREKERRVANNARERLRVKDINEAFKELGRMCQLHLNSEKPQTKLLILHQAVSVILSLEQQVRERNLNPKAACLKRREEEKVSGVDPQMGLSGGHPGVGDSHNPVGHM.

6 disordered regions span residues 42 to 82 (STQF…GTHY), 140 to 191 (SALS…YPAN), 276 to 313 (NPSV…GTAT), 331 to 372 (DHSS…SYDG), 460 to 558 (VPAQ…ERRV), and 628 to 658 (EEEK…VGHM). Positions 173-179 (PKKVRKV) match the Nuclear localization signal motif. Over residues 276–303 (NPSVTSSFSSTPAQYGVSSHTPPISTGD) the composition is skewed to polar residues. Residues 333 to 344 (SSTNFSSTPSTP) show a composition bias toward low complexity. Polar residues predominate over residues 345 to 355 (VGSPQGITGSG). A compositionally biased stretch (basic and acidic residues) spans 493–507 (PDIKRESKEDEENRS). The span at 533-544 (QDEDEDEDDDNL) shows a compositional bias: acidic residues. The span at 548 to 558 (QKAEREKERRV) shows a compositional bias: basic and acidic residues. The bHLH domain maps to 555 to 608 (ERRVANNARERLRVKDINEAFKELGRMCQLHLNSEKPQTKLLILHQAVSVILSL).

As to quaternary structure, homodimer. Heterodimer; efficient DNA binding requires dimerization with another bHLH protein. Interacts with tgfb1i1.

The protein localises to the nucleus. Transcriptional regulator involved in the initiation of neuronal differentiation and mesenchymal to epithelial transition. Heterodimers between tcf3 and tissue-specific basic helix-loop-helix (bHLH) proteins play major roles in determining tissue-specific cell fate during embryogenesis, like muscle or early B-cell differentiation. Together with tcf15, required for the mesenchymal to epithelial transition. Dimers bind DNA on E-box motifs: 5'-CANNTG-3'. The polypeptide is Transcription factor E2-alpha (tcf3) (Xenopus laevis (African clawed frog)).